Consider the following 839-residue polypeptide: Probable alpha-glucuronidase A (839 aa).

A signal peptide spans 1–18; that stretch reads MRWSFLTVLLWLVSLTGA. Asn-49, Asn-101, Asn-148, Asn-221, Asn-278, Asn-309, Asn-342, Asn-464, Asn-526, Asn-575, Asn-681, and Asn-731 each carry an N-linked (GlcNAc...) asparagine glycan.

The protein belongs to the glycosyl hydrolase 67 family.

Its subcellular location is the secreted. The enzyme catalyses an alpha-D-glucuronoside + H2O = D-glucuronate + an alcohol. In terms of biological role, alpha-glucuronidase involved in the hydrolysis of xylan, a major structural heterogeneous polysaccharide found in plant biomass representing the second most abundant polysaccharide in the biosphere, after cellulose. Releases 4-O-methylglucuronic acid from xylan. The chain is Probable alpha-glucuronidase A (aguA) from Aspergillus flavus (strain ATCC 200026 / FGSC A1120 / IAM 13836 / NRRL 3357 / JCM 12722 / SRRC 167).